The primary structure comprises 119 residues: Large ribosomal subunit protein bL20 (119 aa).

This sequence belongs to the bacterial ribosomal protein bL20 family.

Its function is as follows. Binds directly to 23S ribosomal RNA and is necessary for the in vitro assembly process of the 50S ribosomal subunit. It is not involved in the protein synthesizing functions of that subunit. The polypeptide is Large ribosomal subunit protein bL20 (Streptococcus mutans serotype c (strain ATCC 700610 / UA159)).